A 955-amino-acid chain; its full sequence is GPI inositol-deacylase B (955 aa).

Asn7 carries N-linked (GlcNAc...) asparagine glycosylation. A helical membrane pass occupies residues 8-28 (ASVALWTVFTILTIWISFALH). The active site involves Ser180. An N-linked (GlcNAc...) asparagine glycan is attached at Asn431. Helical transmembrane passes span 489–509 (IAFP…SGGV), 600–620 (LLFS…FWRY), 643–663 (YLSW…FEFI), and 703–723 (PIGV…VVVV). Asn753 is a glycosylation site (N-linked (GlcNAc...) asparagine). 3 helical membrane-spanning segments follow: residues 772–792 (VIIA…LAFA), 840–860 (TMSV…AVWV), and 870–890 (IFSS…IENL). Asn914 is a glycosylation site (N-linked (GlcNAc...) asparagine). Residues 919–939 (GMMHAFMIHHWFNLLAGWLLI) traverse the membrane as a helical segment. Asn945 carries N-linked (GlcNAc...) asparagine glycosylation.

This sequence belongs to the GPI inositol-deacylase family.

It localises to the endoplasmic reticulum membrane. Involved in inositol deacylation of GPI-anchored proteins which plays important roles in the quality control and ER-associated degradation of GPI-anchored proteins. This chain is GPI inositol-deacylase B (BST1B), found in Yarrowia lipolytica (strain CLIB 122 / E 150) (Yeast).